Here is a 794-residue protein sequence, read N- to C-terminus: Zinc finger protein 148 (794 aa).

Residue Lys-6 forms a Glycyl lysine isopeptide (Lys-Gly) (interchain with G-Cter in SUMO2) linkage. Position 51 is a phosphoserine (Ser-51). Glycyl lysine isopeptide (Lys-Gly) (interchain with G-Cter in SUMO2) cross-links involve residues Lys-88, Lys-115, and Lys-132. The C2H2-type 1 zinc-finger motif lies at 171–193; that stretch reads HVCEHCNAAFRTNYHLQRHVFIH. Position 194 is a phosphothreonine (Thr-194). 2 C2H2-type zinc fingers span residues 199 to 221 and 227 to 249; these read FQCS…EKIH and FRCD…KRTH. Ser-250 is modified (phosphoserine). Residues 255–278 form a C2H2-type 4 zinc finger; it reads YQCEYCLQYFSRTDRVLKHKRMCH. A Glycyl lysine isopeptide (Lys-Gly) (interchain with G-Cter in SUMO2) cross-link involves residue Lys-291. The disordered stretch occupies residues 298–336; that stretch reads EEDSGFSTSPKDNSLPKKKRQKTEKKSSGMDKESVLDKS. A phosphoserine mark is found at Ser-301 and Ser-306. Lys-308 is covalently cross-linked (Glycyl lysine isopeptide (Lys-Gly) (interchain with G-Cter in SUMO2)). Basic and acidic residues predominate over residues 321 to 336; the sequence is EKKSSGMDKESVLDKS. Residue Lys-356 forms a Glycyl lysine isopeptide (Lys-Gly) (interchain with G-Cter in SUMO1); alternate linkage. Lys-356 is covalently cross-linked (Glycyl lysine isopeptide (Lys-Gly) (interchain with G-Cter in SUMO2); alternate). Lys-402 is covalently cross-linked (Glycyl lysine isopeptide (Lys-Gly) (interchain with G-Cter in SUMO2)). Position 412 is a phosphoserine (Ser-412). Residues Lys-421 and Lys-424 each participate in a glycyl lysine isopeptide (Lys-Gly) (interchain with G-Cter in SUMO2) cross-link. Over residues 574 to 588 the composition is skewed to polar residues; the sequence is NSSDVPEVTQSENVG. The tract at residues 574 to 599 is disordered; the sequence is NSSDVPEVTQSENVGSSSQASSSDKA. Lys-607 is modified (N6-acetyllysine). Residues Ser-665 and Ser-784 each carry the phosphoserine modification.

The protein belongs to the krueppel C2H2-type zinc-finger protein family. Interacts with HNRNPDL. Interacts with the 5FMC complex; the interaction requires association with CHTOP. Interacts with CAVIN1. In terms of processing, sumoylated with SUMO2. Desumoylated by SENP3, resulting in the stimulation of transcription of its target genes. Strong expression detected in brain, lung, liver and kidney, with lower levels detected in spleen, skeletal muscle, testis and heart.

The protein localises to the nucleus. Functionally, involved in transcriptional regulation. Represses the transcription of a number of genes including gastrin, stromelysin and enolase. Binds to the G-rich box in the enhancer region of these genes. In Mus musculus (Mouse), this protein is Zinc finger protein 148 (Znf148).